The sequence spans 284 residues: Protease HtpX homolog (284 aa).

A run of 2 helical transmembrane segments spans residues 7–26 (TYLLMALLVGLIYAICMMLH) and 33–47 (IILALIPNVIAYYMS). Position 129 (His129) interacts with Zn(2+). Glu130 is a catalytic residue. His133 provides a ligand contact to Zn(2+). Helical transmembrane passes span 148–168 (LAGAIVMIAEWMLYWGGIFFV) and 180–200 (IGTILLLILAPIAATIIQFAI). A Zn(2+)-binding site is contributed by Glu205.

The protein belongs to the peptidase M48B family. Zn(2+) is required as a cofactor.

It is found in the cell membrane. This chain is Protease HtpX homolog, found in Methanocaldococcus jannaschii (strain ATCC 43067 / DSM 2661 / JAL-1 / JCM 10045 / NBRC 100440) (Methanococcus jannaschii).